Consider the following 444-residue polypeptide: uncharacterized protein (444 aa).

Residues 1–69 (MEKYMSLLTR…PKSGYYIVKK (69 aa)) enclose the HTH gntR-type domain. A DNA-binding region (H-T-H motif) is located at residues 29 to 48 (IRQLSARYQVSKSTVIRALQ). An N6-(pyridoxal phosphate)lysine modification is found at Lys286.

This sequence in the C-terminal section; belongs to the class-I pyridoxal-phosphate-dependent aminotransferase family. Requires pyridoxal 5'-phosphate as cofactor.

This is an uncharacterized protein from Bacillus subtilis (strain 168).